Consider the following 89-residue polypeptide: Mitochondrial import inner membrane translocase subunit tim10 (89 aa).

The Twin CX3C motif signature appears at 39–64 (CHKKCISPKYYEADLTKGESVCIDRC). 2 disulfides stabilise this stretch: C39/C64 and C43/C60.

The protein belongs to the small Tim family. As to quaternary structure, heterohexamer; composed of 3 copies of TIM9 and 3 copies of TIM10, named soluble 70 kDa complex. Associates directly with the TIM22 complex, whose core is composed of TIM22 and TIM54. Interacts with the transmembrane regions of multi-pass transmembrane proteins in transit.

It localises to the mitochondrion inner membrane. Its function is as follows. Mitochondrial intermembrane chaperone that participates in the import and insertion of multi-pass transmembrane proteins into the mitochondrial inner membrane. Also required for the transfer of beta-barrel precursors from the TOM complex to the sorting and assembly machinery (SAM complex) of the outer membrane. Acts as a chaperone-like protein that protects the hydrophobic precursors from aggregation and guide them through the mitochondrial intermembrane space. This Schizosaccharomyces pombe (strain 972 / ATCC 24843) (Fission yeast) protein is Mitochondrial import inner membrane translocase subunit tim10 (tim10).